Reading from the N-terminus, the 3595-residue chain is Replicase polyprotein 1ab (3595 aa).

The segment at 3 to 23 (CECPRSNLVVMCSGAFCCVLC) adopts a C4-type; atypical zinc-finger fold. Residues 56-164 (SGLEGRYCAL…PTTIPFNTTG (109 aa)) enclose the Peptidase C31 domain. Catalysis depends on for Nsp1-alpha papain-like cysteine proteinase activity residues C63 and H130. One can recognise a Peptidase C32 domain in the interval 239–350 (LSFEHGRCWL…LKLPGKTYFG (112 aa)). Catalysis depends on for Nsp1-beta papain-like cysteine proteinase activity residues C246 and H309. Active-site for Nsp2 cysteine proteinase activity residues include C378 and H430. The segment at 482-527 (RRGGGKKSGQSSGVRAPGRTTPDLAGDWGKAVDDQEKTASKVTTDK) is disordered. Over residues 511–520 (KAVDDQEKTA) the composition is skewed to basic and acidic residues. The Peptidase C33 domain maps to 633–736 (TFIPPPDGGC…HGWCSSLLSE (104 aa)). The interval 808-862 (QVRTVDPSQPAAPLPPVPRPRKRKAAAQQVSKVPSEQDPSLAHDPPEKPDSVRPP) is disordered. Over residues 851-860 (DPPEKPDSVR) the composition is skewed to basic and acidic residues. 7 helical membrane-spanning segments follow: residues 922–942 (MFFL…AGVI), 951–971 (ILCC…AISS), 1019–1039 (VALF…VIGV), 1239–1259 (IFRT…GYWV), 1316–1336 (PYIV…PGII), 1345–1365 (ALLP…IIAA), and 1381–1401 (AFVD…GWIL). The segment at 922–1039 (MFFLFLGSPL…MVDVLLVIGV (118 aa)) is HD1. The tract at residues 1239-1399 (IFRTALAAAW…VVLTALLVGW (161 aa)) is HD2. The Peptidase S32 domain occupies 1464-1664 (GLLREKTRAS…RLLESSINLE (201 aa)). Catalysis depends on charge relay system; for 3C-like serine proteinase activity residues H1502, D1527, and S1580. Helical transmembrane passes span 1673–1693 (IIVA…PFVV), 1711–1731 (YNYS…IFFI), 1744–1764 (ALIC…IILG), and 1784–1804 (AIAI…LELF). An HD3 region spans residues 1687–1804 (LSIPFVVAFF…CVAACCLELF (118 aa)). The 171-residue stretch at 2083-2253 (DMNRLRAIIS…YPYKLHPVRG (171 aa)) folds into the NiRAN domain. A RdRp catalytic domain is found at 2491-2625 (GRCLETDLAS…LNESDDLPNF (135 aa)). The AV ZBD domain maps to 2746-2812 (GKEVQVCSIC…IPILKDRTKF (67 aa)). Positions 2752, 2755, 2765, 2770, 2773, 2777, 2779, 2782, 2789, 2791, 2798, and 2801 each coordinate Zn(2+). A (+)RNA virus helicase ATP-binding domain is found at 2862–3022 (DLPDGKYSMK…VFELMKKNAL (161 aa)). 2897 to 2904 (GPPGSGKT) is an ATP binding site. The (+)RNA virus helicase C-terminal domain occupies 3023-3157 (HAIYRFGQNI…DGKARVMLSD (135 aa)). The AV-Nsp11N/CoV-Nsp15M domain occupies 3196–3292 (SGSLSPLPRV…LTKFLDGRAV (97 aa)). The NendoU domain maps to 3294–3416 (MEDSVYSTGR…MVWRDQTMYF (123 aa)). Residues H3325, H3340, and K3369 contribute to the active site.

The protein belongs to the arteriviridae polyprotein family. Post-translationally, specific enzymatic cleavages in vivo by its own proteases yield mature proteins. There are two alternative pathways for processing. Either nsp4-5 is cleaved, which represents the major pathway or the nsp5-6 and nsp6-7 are processed, which represents the minor pathway. The major pathway occurs when nsp2 acts as a cofactor for nsp4.

It is found in the host membrane. The protein resides in the host cytoplasm. The protein localises to the host perinuclear region. The catalysed reaction is RNA(n) + a ribonucleoside 5'-triphosphate = RNA(n+1) + diphosphate. The enzyme catalyses ATP + H2O = ADP + phosphate + H(+). It catalyses the reaction uridylyl-uridylyl-ribonucleotide-RNA = a 3'-end uridylyl-2',3'-cyclophospho-uridine-RNA + a 5'-end dephospho-ribonucleoside-RNA. In terms of biological role, the replicase polyprotein 1ab is a multifunctional protein: it contains the activities necessary for the transcription of negative stranded RNA, leader RNA, subgenomic mRNAs and progeny virion RNA as well as proteinases responsible for the cleavage of the polyprotein into functional products. Functionally, the Nsp1 chain is essential for viral subgenomic mRNA synthesis. The 3C-like serine proteinase chain is responsible for the majority of cleavages as it cleaves the C-terminus of the polyprotein. Its function is as follows. Plays a role in viral transcription/replication and prevents the simultaneous activation of host cell dsRNA sensors, such as MDA5/IFIH1, OAS, and PKR. Acts by degrading the 5'-polyuridines generated during replication of the poly(A) region of viral genomic and subgenomic RNAs. Catalyzes a two-step reaction in which a 2'3'-cyclic phosphate (2'3'-cP) is first generated by 2'-O transesterification, which is then hydrolyzed to a 3'-phosphate (3'-P). If not degraded, poly(U) RNA would hybridize with poly(A) RNA tails and activate host dsRNA sensors. In terms of biological role, the helicase chain, which contains a zinc finger structure, displays RNA and DNA duplex-unwinding activities with 5' to 3' polarity. The polypeptide is Replicase polyprotein 1ab (rep) (Simian hemorrhagic fever virus (SHFV)).